The following is a 230-amino-acid chain: Ribose-5-phosphate isomerase A (230 aa).

Substrate is bound by residues 29-32 (TGST), 85-88 (DGAD), and 99-102 (KGAG). Glu108 acts as the Proton acceptor in catalysis. Lys126 contacts substrate.

This sequence belongs to the ribose 5-phosphate isomerase family. As to quaternary structure, homodimer.

It carries out the reaction aldehydo-D-ribose 5-phosphate = D-ribulose 5-phosphate. Its pathway is carbohydrate degradation; pentose phosphate pathway; D-ribose 5-phosphate from D-ribulose 5-phosphate (non-oxidative stage): step 1/1. Functionally, catalyzes the reversible conversion of ribose-5-phosphate to ribulose 5-phosphate. The polypeptide is Ribose-5-phosphate isomerase A (Synechococcus sp. (strain JA-3-3Ab) (Cyanobacteria bacterium Yellowstone A-Prime)).